Here is an 894-residue protein sequence, read N- to C-terminus: MAFSSCFLLVLLQIFSALLLCLAQDQSGFISLDCGSPRETSFREKTTNITYISDANFINTGVGGSIKQGYRTQFQQQTWNLRSFPQGIRNCYTLNLTIGDEYLIRANFLHGGYDDKPSTQFELYLGPNLWSTVTTTNETEASIFEMIHILTTDRLQICLVKTGNATPFISALELRKLMNTTYLTRQGSLQTFIRADVGATVNQGYRYGIDVFDRVWTPYNFGNWSQISTNQSVNINNDYQPPEIAMVTASVPTDPDAAMNISLVGVERTVQFYVFMHFAEIQELKSNDTREFNIMYNNKHIYGPFRPLNFTTSSVFTPTEVVADANGQYIFSLQRTGNSTLPPLLNAMEIYSVNLLPQQETDRKEVDAMMNIKSAYGVNKIDWEGDPCVPLDYKWSGVNCTYVDNETPKIISLDLSTSGLTGEILEFISDLTSLEVLDLSNNSLTGSVPEFLANMETLKLINLSGNELNGSIPATLLDKERRGSITLSIEGNTGLCSSTSCATTKKKKKNTVIAPVAASLVSVFLIGAGIVTFLILKRKKRTKLGLNPNSGTGTTPLHSRSHHGFEPPVIAKNRKLTYIDVVKITNNFERVLGRGGFGVVYYGVLNNEPVAVKMLTESTALGYKQFKAEVELLLRVHHKDLTCLVGYCEEGDKMSLIYEFMANGDLKEHLSGKRGPSILTWEGRLRIAAESAQGLEYLHNGCKPQIVHRDIKTTNILLNEKFQAKLADFGLSRSFPLGTETHVSTIVAGTPGYLDPEYYRTNWLTEKSDVFSFGVVLLELVTNQPVIDMKREKSHIAEWVGLMLSRGDINSIVDPKLQGDFDPNTIWKVVETAMTCLNPSSSRRPTMTQVVMDLKECLNMEMARNMGSRMTDSTNDSSIELSMNFTTELNPGAR.

The first 23 residues, 1–23, serve as a signal peptide directing secretion; the sequence is MAFSSCFLLVLLQIFSALLLCLA. At 24 to 515 the chain is on the extracellular side; the sequence is QDQSGFISLD…KKKKNTVIAP (492 aa). N48, N95, N137, N179, N223, N230, N260, N287, N309, N338, N399, N441, N462, and N469 each carry an N-linked (GlcNAc...) asparagine glycan. LRR repeat units follow at residues 431-457 and 459-479; these read LTSL…NMET and KLIN…LLDK. The chain crosses the membrane as a helical span at residues 516 to 536; that stretch reads VAASLVSVFLIGAGIVTFLIL. Residues 537–894 lie on the Cytoplasmic side of the membrane; that stretch reads KRKKRTKLGL…FTTELNPGAR (358 aa). T577 carries the post-translational modification Phosphothreonine. The Protein kinase domain occupies 586 to 858; that stretch reads NNFERVLGRG…QVVMDLKECL (273 aa). Residues 592–600 and K613 contribute to the ATP site; that span reads LGRGGFGVV. Y658 bears the Phosphotyrosine mark. D710 functions as the Proton acceptor in the catalytic mechanism. Phosphoserine is present on S744. A phosphothreonine mark is found at T745 and T750. At Y758 the chain carries Phosphotyrosine.

It belongs to the protein kinase superfamily. Ser/Thr protein kinase family. In terms of assembly, homodimerization. Interacts with BAK1 and FLS2; triggers FLS2-BAK1 complex formation upon microbe-associated molecular patterns (MAMPs) treatment. Also binds to CERK1 and EFR. In terms of tissue distribution, expressed in roots, cotyledons, leaves, flowers and siliques.

It is found in the cell membrane. Negatively regulates the abscisic acid (ABA) signaling pathway. Required for full susceptibility to filamentous (hemi)biotrophic oomycetes (e.g. H.arabidopsidis and P.parasitica) and fungal (e.g. E.cruciferarum) pathogens, probably by triggering the repression of ABA-sensitive COLD REGULATED and RESISTANCE TO DESICCATION genes during infection, but independently of immune responses. Involved in BAK1-dependent and BAK1-independent microbe-associated molecular patterns (MAMPs)-triggered immunity (PTI) leading to defense responses, including callose deposition and MAPK cascade activation, toward pathogenic bacteria (e.g. P.syringae). Required for chitin-mediated PTI. The polypeptide is LRR receptor-like serine/threonine-protein kinase IOS1 (Arabidopsis thaliana (Mouse-ear cress)).